Here is a 428-residue protein sequence, read N- to C-terminus: AP-1 complex subunit mu (428 aa).

Position 2 is an N-acetylalanine; partial (Ala2). One can recognise an MHD domain in the interval 169–426 (KNEVFLDVVE…VCLSGDYQFR (258 aa)).

This sequence belongs to the adaptor complexes medium subunit family. Adaptor protein complex 1 (AP-1) is a heterotetramer composed of two large adaptins (gamma-type subunit and beta-type subunit), a medium adaptin (mu-type subunit) and a small adaptin (sigma-type subunit).

It is found in the golgi apparatus. The protein resides in the trans-Golgi network. It localises to the cytoplasmic vesicle. Its subcellular location is the clathrin-coated vesicle membrane. In terms of biological role, subunit of clathrin-associated adaptor protein complex 1 that plays a role in protein sorting in the trans-Golgi network (TGN) and endosomes. The AP complexes mediate the recruitment of clathrin to membranes and the recognition of sorting signals within the cytosolic tails of transmembrane cargo molecules. Also involved in early steps of phagocytosis and macropinocytosis. The chain is AP-1 complex subunit mu (apm1) from Dictyostelium discoideum (Social amoeba).